The sequence spans 96 residues: Growth-regulated alpha protein (96 aa).

The N-terminal stretch at 1–24 (MIPATRSLLCAALLLLATSRLATG) is a signal peptide. Cystine bridges form between cysteine 33/cysteine 59 and cysteine 35/cysteine 75.

Belongs to the intercrine alpha (chemokine CxC) family. In terms of processing, the N-terminal processed form KC(5-72) is produced by proteolytic cleavage after secretion from bone marrow stromal cells.

The protein resides in the secreted. Has chemotactic activity for neutrophils. Contributes to neutrophil activation during inflammation. Hematoregulatory chemokine, which, in vitro, suppresses hematopoietic progenitor cell proliferation. KC(5-72) shows a highly enhanced hematopoietic activity. In Mus musculus (Mouse), this protein is Growth-regulated alpha protein (Cxcl1).